We begin with the raw amino-acid sequence, 150 residues long: Nucleoside diphosphate kinase (150 aa).

ATP-binding residues include lysine 9, phenylalanine 57, arginine 85, threonine 91, arginine 102, and asparagine 112. The active-site Pros-phosphohistidine intermediate is histidine 115.

It belongs to the NDK family. Requires Mg(2+) as cofactor.

The protein localises to the cytoplasm. It carries out the reaction a 2'-deoxyribonucleoside 5'-diphosphate + ATP = a 2'-deoxyribonucleoside 5'-triphosphate + ADP. It catalyses the reaction a ribonucleoside 5'-diphosphate + ATP = a ribonucleoside 5'-triphosphate + ADP. Functionally, major role in the synthesis of nucleoside triphosphates other than ATP. The ATP gamma phosphate is transferred to the NDP beta phosphate via a ping-pong mechanism, using a phosphorylated active-site intermediate. This Methanothermobacter thermautotrophicus (strain ATCC 29096 / DSM 1053 / JCM 10044 / NBRC 100330 / Delta H) (Methanobacterium thermoautotrophicum) protein is Nucleoside diphosphate kinase.